We begin with the raw amino-acid sequence, 123 residues long: Small ribosomal subunit protein uS12 (123 aa).

At Asp-89 the chain carries 3-methylthioaspartic acid.

This sequence belongs to the universal ribosomal protein uS12 family. In terms of assembly, part of the 30S ribosomal subunit. Contacts proteins S8 and S17. May interact with IF1 in the 30S initiation complex.

With S4 and S5 plays an important role in translational accuracy. Its function is as follows. Interacts with and stabilizes bases of the 16S rRNA that are involved in tRNA selection in the A site and with the mRNA backbone. Located at the interface of the 30S and 50S subunits, it traverses the body of the 30S subunit contacting proteins on the other side and probably holding the rRNA structure together. The combined cluster of proteins S8, S12 and S17 appears to hold together the shoulder and platform of the 30S subunit. This is Small ribosomal subunit protein uS12 from Pelagibacter ubique (strain HTCC1062).